Consider the following 256-residue polypeptide: Nickel import ATP-binding protein NikD (256 aa).

Residues 6–245 (LEIRGLRIET…PASATARTLL (240 aa)) form the ABC transporter domain. 38 to 45 (GASGSGKS) contributes to the ATP binding site.

Belongs to the ABC transporter superfamily. Nickel importer (TC 3.A.1.5.3) family. In terms of assembly, the complex is composed of two ATP-binding proteins (NikD and NikE), two transmembrane proteins (NikB and NikC) and a solute-binding protein (NikA).

The protein resides in the cell inner membrane. It carries out the reaction Ni(2+)(out) + ATP + H2O = Ni(2+)(in) + ADP + phosphate + H(+). Functionally, part of the ABC transporter complex NikABCDE involved in nickel import. Responsible for energy coupling to the transport system. This is Nickel import ATP-binding protein NikD from Pseudomonas putida (strain ATCC 47054 / DSM 6125 / CFBP 8728 / NCIMB 11950 / KT2440).